The chain runs to 401 residues: Formate-dependent phosphoribosylglycinamide formyltransferase (401 aa).

Residues 22–23 (EL) and glutamate 82 contribute to the N(1)-(5-phospho-beta-D-ribosyl)glycinamide site. Residues arginine 115, lysine 157, 162-167 (SSGKGQ), 197-200 (EGFI), and glutamate 205 each bind ATP. The ATP-grasp domain maps to 120-315 (RLAAESLGLP…EFELHARAIL (196 aa)). Positions 274 and 286 each coordinate Mg(2+). N(1)-(5-phospho-beta-D-ribosyl)glycinamide is bound by residues aspartate 293, lysine 362, and 369–370 (RR).

It belongs to the PurK/PurT family. As to quaternary structure, homodimer.

It catalyses the reaction N(1)-(5-phospho-beta-D-ribosyl)glycinamide + formate + ATP = N(2)-formyl-N(1)-(5-phospho-beta-D-ribosyl)glycinamide + ADP + phosphate + H(+). It participates in purine metabolism; IMP biosynthesis via de novo pathway; N(2)-formyl-N(1)-(5-phospho-D-ribosyl)glycinamide from N(1)-(5-phospho-D-ribosyl)glycinamide (formate route): step 1/1. Its function is as follows. Involved in the de novo purine biosynthesis. Catalyzes the transfer of formate to 5-phospho-ribosyl-glycinamide (GAR), producing 5-phospho-ribosyl-N-formylglycinamide (FGAR). Formate is provided by PurU via hydrolysis of 10-formyl-tetrahydrofolate. The sequence is that of Formate-dependent phosphoribosylglycinamide formyltransferase from Cupriavidus necator (strain ATCC 17699 / DSM 428 / KCTC 22496 / NCIMB 10442 / H16 / Stanier 337) (Ralstonia eutropha).